A 383-amino-acid chain; its full sequence is Arginine biosynthesis bifunctional protein ArgJ (383 aa).

Substrate-binding residues include Thr-146, Lys-168, Thr-179, Glu-259, Asn-378, and Thr-383. Thr-179 (nucleophile) is an active-site residue.

This sequence belongs to the ArgJ family. In terms of assembly, heterotetramer of two alpha and two beta chains.

Its subcellular location is the cytoplasm. The enzyme catalyses N(2)-acetyl-L-ornithine + L-glutamate = N-acetyl-L-glutamate + L-ornithine. It carries out the reaction L-glutamate + acetyl-CoA = N-acetyl-L-glutamate + CoA + H(+). It functions in the pathway amino-acid biosynthesis; L-arginine biosynthesis; L-ornithine and N-acetyl-L-glutamate from L-glutamate and N(2)-acetyl-L-ornithine (cyclic): step 1/1. It participates in amino-acid biosynthesis; L-arginine biosynthesis; N(2)-acetyl-L-ornithine from L-glutamate: step 1/4. Functionally, catalyzes two activities which are involved in the cyclic version of arginine biosynthesis: the synthesis of N-acetylglutamate from glutamate and acetyl-CoA as the acetyl donor, and of ornithine by transacetylation between N(2)-acetylornithine and glutamate. This chain is Arginine biosynthesis bifunctional protein ArgJ, found in Thermobifida fusca (strain YX).